A 266-amino-acid chain; its full sequence is Flavin-dependent thymidylate synthase (266 aa).

Residues 11–222 form the ThyX domain; sequence GFIRLVDYMG…PLACASFERH (212 aa). FAD contacts are provided by residues Ser57, 80-82, and Glu88; that span reads RHR. DUMP-binding positions include 77 to 80, 88 to 92, and Arg161; these read QWIR and EISGR. The short motif at 80–90 is the ThyX motif element; sequence RHRTARLNEIS. FAD-binding positions include 177-179 and His183; that span reads DLH. Arg188 provides a ligand contact to dUMP. Arg188 acts as the Involved in ionization of N3 of dUMP, leading to its activation in catalysis.

It belongs to the thymidylate synthase ThyX family. In terms of assembly, homotetramer. Requires FAD as cofactor.

The enzyme catalyses dUMP + (6R)-5,10-methylene-5,6,7,8-tetrahydrofolate + NADPH + H(+) = dTMP + (6S)-5,6,7,8-tetrahydrofolate + NADP(+). The protein operates within pyrimidine metabolism; dTTP biosynthesis. Catalyzes the reductive methylation of 2'-deoxyuridine-5'-monophosphate (dUMP) to 2'-deoxythymidine-5'-monophosphate (dTMP) while utilizing 5,10-methylenetetrahydrofolate (mTHF) as the methyl donor, and NADPH and FADH(2) as the reductant. In Treponema denticola (strain ATCC 35405 / DSM 14222 / CIP 103919 / JCM 8153 / KCTC 15104), this protein is Flavin-dependent thymidylate synthase.